A 298-amino-acid polypeptide reads, in one-letter code: tRNA dimethylallyltransferase (298 aa).

16–23 (GPTASGKS) lines the ATP pocket. 18–23 (TASGKS) serves as a coordination point for substrate. 2 interaction with substrate tRNA regions span residues 41–44 (DSMQ) and 165–169 (QRIVR).

This sequence belongs to the IPP transferase family. In terms of assembly, monomer. Requires Mg(2+) as cofactor.

The enzyme catalyses adenosine(37) in tRNA + dimethylallyl diphosphate = N(6)-dimethylallyladenosine(37) in tRNA + diphosphate. In terms of biological role, catalyzes the transfer of a dimethylallyl group onto the adenine at position 37 in tRNAs that read codons beginning with uridine, leading to the formation of N6-(dimethylallyl)adenosine (i(6)A). This Rhizobium radiobacter (Agrobacterium tumefaciens) protein is tRNA dimethylallyltransferase.